Reading from the N-terminus, the 95-residue chain is Small ribosomal subunit protein uS17 (95 aa).

Belongs to the universal ribosomal protein uS17 family. As to quaternary structure, part of the 30S ribosomal subunit.

One of the primary rRNA binding proteins, it binds specifically to the 5'-end of 16S ribosomal RNA. This is Small ribosomal subunit protein uS17 from Streptomyces coelicolor (strain ATCC BAA-471 / A3(2) / M145).